Here is a 207-residue protein sequence, read N- to C-terminus: Outer-membrane lipoprotein LolB (207 aa).

An N-terminal signal peptide occupies residues 1-21; it reads MPQRKISFYRLLPLATLLLAA. Residue cysteine 22 is the site of N-palmitoyl cysteine attachment. Cysteine 22 carries the S-diacylglycerol cysteine lipid modification.

Belongs to the LolB family. In terms of assembly, monomer.

The protein resides in the cell outer membrane. In terms of biological role, plays a critical role in the incorporation of lipoproteins in the outer membrane after they are released by the LolA protein. The sequence is that of Outer-membrane lipoprotein LolB from Yersinia enterocolitica serotype O:8 / biotype 1B (strain NCTC 13174 / 8081).